Consider the following 267-residue polypeptide: 5'-nucleotidase SurE (267 aa).

Residues Asp9, Asp10, Ser40, and Asn97 each contribute to the a divalent metal cation site.

This sequence belongs to the SurE nucleotidase family. A divalent metal cation serves as cofactor.

The protein localises to the cytoplasm. The catalysed reaction is a ribonucleoside 5'-phosphate + H2O = a ribonucleoside + phosphate. Nucleotidase that shows phosphatase activity on nucleoside 5'-monophosphates. The sequence is that of 5'-nucleotidase SurE from Helicobacter pylori (strain J99 / ATCC 700824) (Campylobacter pylori J99).